We begin with the raw amino-acid sequence, 197 residues long: MLPELLFIVLLLLSYLIGSISTAIIVCKMFNLPDSRTQGSNNPGATNVLRIGGKKAAAITLIGDGLKGAIPVLIAHYLAFNMLNVTWVILVTFLGHVYPIFFSFKGGKGVATFLGALLALSYLTGLSFIITWVFVAKVLKISSLSALISTVLTPVYFYLITNNLASTYVIILICLWIFYTHQSNIKRLLNSQENKIN.

5 consecutive transmembrane segments (helical) span residues 6–26 (LFIV…AIIV), 58–78 (AITL…AHYL), 82–102 (MLNV…PIFF), 116–136 (ALLA…VFVA), and 157–177 (FYLI…CLWI).

The protein belongs to the PlsY family. As to quaternary structure, probably interacts with PlsX.

The protein resides in the cell inner membrane. The catalysed reaction is an acyl phosphate + sn-glycerol 3-phosphate = a 1-acyl-sn-glycero-3-phosphate + phosphate. Its pathway is lipid metabolism; phospholipid metabolism. In terms of biological role, catalyzes the transfer of an acyl group from acyl-phosphate (acyl-PO(4)) to glycerol-3-phosphate (G3P) to form lysophosphatidic acid (LPA). This enzyme utilizes acyl-phosphate as fatty acyl donor, but not acyl-CoA or acyl-ACP. The sequence is that of Glycerol-3-phosphate acyltransferase from Ruthia magnifica subsp. Calyptogena magnifica.